The chain runs to 542 residues: Protein MGF 505-11L (542 aa).

It belongs to the asfivirus MGF 505 family.

Plays a role in virus cell tropism, and may be required for efficient virus replication in macrophages. In African swine fever virus (isolate Warthog/Namibia/Wart80/1980) (ASFV), this protein is Protein MGF 505-11L.